We begin with the raw amino-acid sequence, 418 residues long: Probable mitochondrial adenine nucleotide transporter BTL2 (418 aa).

Solcar repeat units lie at residues 122-205, 215-300, and 329-414; these read MNTR…YRKQ, ATNF…LKSS, and LGPI…MKIV. Transmembrane regions (helical) follow at residues 127–147, 180–200, 221–241, 276–296, 335–355, and 383–403; these read HLWA…PLER, GNLL…CAYD, FVAG…LDTI, LVPS…VYDI, LMYG…FEVV, and IPAL…SASI.

It belongs to the mitochondrial carrier (TC 2.A.29) family.

The protein resides in the mitochondrion inner membrane. In terms of biological role, probable mitochondrial adenylate carrier that catalyzes the transport of ATP, ADP and AMP. In Arabidopsis thaliana (Mouse-ear cress), this protein is Probable mitochondrial adenine nucleotide transporter BTL2.